Reading from the N-terminus, the 101-residue chain is Protein translation factor SUI1 homolog (101 aa).

This sequence belongs to the SUI1 family.

The chain is Protein translation factor SUI1 homolog from Methanoregula boonei (strain DSM 21154 / JCM 14090 / 6A8).